A 242-amino-acid polypeptide reads, in one-letter code: UDP-2,3-diacylglucosamine hydrolase (242 aa).

The Mn(2+) site is built by aspartate 8, histidine 10, aspartate 41, asparagine 79, and histidine 114. Substrate is bound at residue 79–80 (NR). Aspartate 122, lysine 164, lysine 167, and histidine 195 together coordinate substrate. Histidine 195 and histidine 197 together coordinate Mn(2+).

Belongs to the LpxH family. Mn(2+) serves as cofactor.

The protein localises to the cell inner membrane. The catalysed reaction is UDP-2-N,3-O-bis[(3R)-3-hydroxytetradecanoyl]-alpha-D-glucosamine + H2O = 2-N,3-O-bis[(3R)-3-hydroxytetradecanoyl]-alpha-D-glucosaminyl 1-phosphate + UMP + 2 H(+). It participates in glycolipid biosynthesis; lipid IV(A) biosynthesis; lipid IV(A) from (3R)-3-hydroxytetradecanoyl-[acyl-carrier-protein] and UDP-N-acetyl-alpha-D-glucosamine: step 4/6. Hydrolyzes the pyrophosphate bond of UDP-2,3-diacylglucosamine to yield 2,3-diacylglucosamine 1-phosphate (lipid X) and UMP by catalyzing the attack of water at the alpha-P atom. Involved in the biosynthesis of lipid A, a phosphorylated glycolipid that anchors the lipopolysaccharide to the outer membrane of the cell. In Vibrio cholerae serotype O1 (strain ATCC 39315 / El Tor Inaba N16961), this protein is UDP-2,3-diacylglucosamine hydrolase.